Reading from the N-terminus, the 336-residue chain is Phospho-N-acetylmuramoyl-pentapeptide-transferase (336 aa).

10 helical membrane passes run 3–23 (LTLIAAIISFMVSAFTMPYFI), 53–73 (GGTVFLLVATAVSLLVSLFSI), 78–98 (SLALISGILSIVVIYGIIGFL), 118–138 (LALQLVGGLMFYFLHVSPSGI), 143–163 (VFGYQLPLGIFYLFFVLFWVV), 174–194 (GIDGLASISVVISLVTYGVIA), 200–220 (FDVLLLIGAMIGALLGFFCFN), 226–246 (VFMGDVGSLALGAMLAAISIA), 251–271 (WTLLIIGIVYVLETSSVMLQV), and 316–336 (AFLWGVGSLASLLVLAILYVF).

The protein belongs to the glycosyltransferase 4 family. MraY subfamily. It depends on Mg(2+) as a cofactor.

Its subcellular location is the cell membrane. It carries out the reaction UDP-N-acetyl-alpha-D-muramoyl-L-alanyl-gamma-D-glutamyl-L-lysyl-D-alanyl-D-alanine + di-trans,octa-cis-undecaprenyl phosphate = Mur2Ac(oyl-L-Ala-gamma-D-Glu-L-Lys-D-Ala-D-Ala)-di-trans,octa-cis-undecaprenyl diphosphate + UMP. The protein operates within cell wall biogenesis; peptidoglycan biosynthesis. Catalyzes the initial step of the lipid cycle reactions in the biosynthesis of the cell wall peptidoglycan: transfers peptidoglycan precursor phospho-MurNAc-pentapeptide from UDP-MurNAc-pentapeptide onto the lipid carrier undecaprenyl phosphate, yielding undecaprenyl-pyrophosphoryl-MurNAc-pentapeptide, known as lipid I. The sequence is that of Phospho-N-acetylmuramoyl-pentapeptide-transferase from Streptococcus pyogenes serotype M1.